Here is a 327-residue protein sequence, read N- to C-terminus: Phosphate acyltransferase (327 aa).

The protein belongs to the PlsX family. As to quaternary structure, homodimer. Probably interacts with PlsY.

It is found in the cytoplasm. It catalyses the reaction a fatty acyl-[ACP] + phosphate = an acyl phosphate + holo-[ACP]. Its pathway is lipid metabolism; phospholipid metabolism. In terms of biological role, catalyzes the reversible formation of acyl-phosphate (acyl-PO(4)) from acyl-[acyl-carrier-protein] (acyl-ACP). This enzyme utilizes acyl-ACP as fatty acyl donor, but not acyl-CoA. The sequence is that of Phosphate acyltransferase from Thermotoga maritima (strain ATCC 43589 / DSM 3109 / JCM 10099 / NBRC 100826 / MSB8).